The following is a 311-amino-acid chain: Methionyl-tRNA formyltransferase (311 aa).

A (6S)-5,6,7,8-tetrahydrofolate-binding site is contributed by S109–P112.

Belongs to the Fmt family.

It carries out the reaction L-methionyl-tRNA(fMet) + (6R)-10-formyltetrahydrofolate = N-formyl-L-methionyl-tRNA(fMet) + (6S)-5,6,7,8-tetrahydrofolate + H(+). In terms of biological role, attaches a formyl group to the free amino group of methionyl-tRNA(fMet). The formyl group appears to play a dual role in the initiator identity of N-formylmethionyl-tRNA by promoting its recognition by IF2 and preventing the misappropriation of this tRNA by the elongation apparatus. This Moorella thermoacetica (strain ATCC 39073 / JCM 9320) protein is Methionyl-tRNA formyltransferase.